A 698-amino-acid polypeptide reads, in one-letter code: Polyribonucleotide nucleotidyltransferase (698 aa).

Residues aspartate 490 and aspartate 496 each contribute to the Mg(2+) site. In terms of domain architecture, KH spans 558 to 617 (PVIYTMRIPQDKIGALIGPGGKNIKRITETTDTKIDINDDGVVQIAAVNGDKLAMAKAEI). Residues 627-695 (NKIYKGKVVS…NNGKVRLSRK (69 aa)) form the S1 motif domain.

This sequence belongs to the polyribonucleotide nucleotidyltransferase family. Mg(2+) serves as cofactor.

It localises to the cytoplasm. The enzyme catalyses RNA(n+1) + phosphate = RNA(n) + a ribonucleoside 5'-diphosphate. Functionally, involved in mRNA degradation. Catalyzes the phosphorolysis of single-stranded polyribonucleotides processively in the 3'- to 5'-direction. This chain is Polyribonucleotide nucleotidyltransferase, found in Elusimicrobium minutum (strain Pei191).